A 317-amino-acid polypeptide reads, in one-letter code: 4-hydroxy-3-methylbut-2-enyl diphosphate reductase (317 aa).

Cys12 is a binding site for [4Fe-4S] cluster. Positions 41 and 74 each coordinate (2E)-4-hydroxy-3-methylbut-2-enyl diphosphate. The dimethylallyl diphosphate site is built by His41 and His74. His41 and His74 together coordinate isopentenyl diphosphate. Cys97 is a binding site for [4Fe-4S] cluster. His125 serves as a coordination point for (2E)-4-hydroxy-3-methylbut-2-enyl diphosphate. His125 lines the dimethylallyl diphosphate pocket. Isopentenyl diphosphate is bound at residue His125. The Proton donor role is filled by Glu127. (2E)-4-hydroxy-3-methylbut-2-enyl diphosphate is bound at residue Thr168. Cys198 is a binding site for [4Fe-4S] cluster. Residues Ser226, Ser227, Asn228, and Ser270 each coordinate (2E)-4-hydroxy-3-methylbut-2-enyl diphosphate. Residues Ser226, Ser227, Asn228, and Ser270 each contribute to the dimethylallyl diphosphate site. The isopentenyl diphosphate site is built by Ser226, Ser227, Asn228, and Ser270.

This sequence belongs to the IspH family. As to quaternary structure, homodimer. The cofactor is [4Fe-4S] cluster.

The enzyme catalyses isopentenyl diphosphate + 2 oxidized [2Fe-2S]-[ferredoxin] + H2O = (2E)-4-hydroxy-3-methylbut-2-enyl diphosphate + 2 reduced [2Fe-2S]-[ferredoxin] + 2 H(+). It carries out the reaction dimethylallyl diphosphate + 2 oxidized [2Fe-2S]-[ferredoxin] + H2O = (2E)-4-hydroxy-3-methylbut-2-enyl diphosphate + 2 reduced [2Fe-2S]-[ferredoxin] + 2 H(+). It participates in isoprenoid biosynthesis; dimethylallyl diphosphate biosynthesis; dimethylallyl diphosphate from (2E)-4-hydroxy-3-methylbutenyl diphosphate: step 1/1. The protein operates within isoprenoid biosynthesis; isopentenyl diphosphate biosynthesis via DXP pathway; isopentenyl diphosphate from 1-deoxy-D-xylulose 5-phosphate: step 6/6. Its function is as follows. Catalyzes the conversion of 1-hydroxy-2-methyl-2-(E)-butenyl 4-diphosphate (HMBPP) into a mixture of isopentenyl diphosphate (IPP) and dimethylallyl diphosphate (DMAPP). Acts in the terminal step of the DOXP/MEP pathway for isoprenoid precursor biosynthesis. The protein is 4-hydroxy-3-methylbut-2-enyl diphosphate reductase of Yersinia enterocolitica serotype O:8 / biotype 1B (strain NCTC 13174 / 8081).